The chain runs to 394 residues: Phosphopentomutase (394 aa).

Mn(2+) contacts are provided by aspartate 14, aspartate 287, histidine 292, aspartate 328, histidine 329, and histidine 340.

The protein belongs to the phosphopentomutase family. It depends on Mn(2+) as a cofactor.

It localises to the cytoplasm. The enzyme catalyses 2-deoxy-alpha-D-ribose 1-phosphate = 2-deoxy-D-ribose 5-phosphate. It catalyses the reaction alpha-D-ribose 1-phosphate = D-ribose 5-phosphate. It functions in the pathway carbohydrate degradation; 2-deoxy-D-ribose 1-phosphate degradation; D-glyceraldehyde 3-phosphate and acetaldehyde from 2-deoxy-alpha-D-ribose 1-phosphate: step 1/2. Its function is as follows. Isomerase that catalyzes the conversion of deoxy-ribose 1-phosphate (dRib-1-P) and ribose 1-phosphate (Rib-1-P) to deoxy-ribose 5-phosphate (dRib-5-P) and ribose 5-phosphate (Rib-5-P), respectively. This Listeria innocua serovar 6a (strain ATCC BAA-680 / CLIP 11262) protein is Phosphopentomutase.